Reading from the N-terminus, the 129-residue chain is Large ribosomal subunit protein uL22 (129 aa).

This sequence belongs to the universal ribosomal protein uL22 family. As to quaternary structure, part of the 50S ribosomal subunit.

In terms of biological role, this protein binds specifically to 23S rRNA; its binding is stimulated by other ribosomal proteins, e.g. L4, L17, and L20. It is important during the early stages of 50S assembly. It makes multiple contacts with different domains of the 23S rRNA in the assembled 50S subunit and ribosome. The globular domain of the protein is located near the polypeptide exit tunnel on the outside of the subunit, while an extended beta-hairpin is found that lines the wall of the exit tunnel in the center of the 70S ribosome. The chain is Large ribosomal subunit protein uL22 from Brucella abortus (strain 2308).